A 62-amino-acid polypeptide reads, in one-letter code: Small ribosomal subunit protein eS17 (62 aa).

It belongs to the eukaryotic ribosomal protein eS17 family.

The sequence is that of Small ribosomal subunit protein eS17 from Methanoculleus marisnigri (strain ATCC 35101 / DSM 1498 / JR1).